Reading from the N-terminus, the 83-residue chain is UPF0512 protein G (83 aa).

Belongs to the UPF0512 family.

The polypeptide is UPF0512 protein G (Dictyostelium discoideum (Social amoeba)).